Here is a 328-residue protein sequence, read N- to C-terminus: Malate dehydrogenase (328 aa).

NAD(+) is bound at residue 12-18 (GAAGQIG). Substrate contacts are provided by arginine 92 and arginine 98. NAD(+) contacts are provided by residues asparagine 105, glutamine 112, and 129–131 (TGN). Asparagine 131 and arginine 162 together coordinate substrate. The active-site Proton acceptor is histidine 187.

The protein belongs to the LDH/MDH superfamily. MDH type 2 family.

It carries out the reaction (S)-malate + NAD(+) = oxaloacetate + NADH + H(+). In terms of biological role, catalyzes the reversible oxidation of malate to oxaloacetate. The protein is Malate dehydrogenase of Nocardioides sp. (strain ATCC BAA-499 / JS614).